We begin with the raw amino-acid sequence, 231 residues long: Cytochrome c oxidase assembly factor 7 (231 aa).

N-acetylalanine is present on alanine 2. 5 Sel1-like repeats span residues 34–66 (PEGC…EKYG), 68–104 (GDSC…EKPG), 108–146 (VESC…DGGY), 147–183 (AASC…DLGH), and 184–219 (VWAC…QLHK).

Belongs to the hcp beta-lactamase family. As to quaternary structure, interacts with CHCHD4/MIA40 through transient intermolecular disulfide bonds.

The protein resides in the mitochondrion intermembrane space. In terms of biological role, required for assembly of mitochondrial respiratory chain complex I and complex IV. This chain is Cytochrome c oxidase assembly factor 7 (Coa7), found in Mus musculus (Mouse).